The chain runs to 448 residues: N-succinylarginine dihydrolase (448 aa).

Substrate is bound by residues 19–28, Asn-110, and 137–138; these read GGLSYGNVAS and HR. Glu-174 is an active-site residue. Position 214 (Arg-214) interacts with substrate. Residue His-250 is part of the active site. The substrate site is built by Asp-252 and Asn-365. The active-site Nucleophile is Cys-371.

This sequence belongs to the succinylarginine dihydrolase family. In terms of assembly, homodimer.

It catalyses the reaction N(2)-succinyl-L-arginine + 2 H2O + 2 H(+) = N(2)-succinyl-L-ornithine + 2 NH4(+) + CO2. It participates in amino-acid degradation; L-arginine degradation via AST pathway; L-glutamate and succinate from L-arginine: step 2/5. Functionally, catalyzes the hydrolysis of N(2)-succinylarginine into N(2)-succinylornithine, ammonia and CO(2). This chain is N-succinylarginine dihydrolase, found in Pseudomonas fluorescens (strain Pf0-1).